The sequence spans 732 residues: Aldehyde oxidoreductase molybdenum-binding subunit PaoC (732 aa).

Mo-molybdopterin cytosine dinucleotide-binding positions include 241–242 (GF), 468–470 (IGT), 511–512 (GA), 615–621 (RILNPKT), Gln625, and 688–691 (KGVG). Glu692 (proton acceptor) is an active-site residue.

Belongs to the xanthine dehydrogenase family. In terms of assembly, heterotrimer composed of PaoA, PaoB and PaoC. It depends on Mo-molybdopterin cytosine dinucleotide as a cofactor.

It localises to the periplasm. The enzyme catalyses an aldehyde + A + H2O = a carboxylate + AH2 + H(+). The complex requires PaoD for activity. In terms of biological role, oxidizes aldehydes to the corresponding carboxylic acids with a preference for aromatic aldehydes. It might play a role in the detoxification of aldehydes to avoid cell damage. This chain is Aldehyde oxidoreductase molybdenum-binding subunit PaoC, found in Escherichia coli (strain K12).